Consider the following 465-residue polypeptide: Uridine kinase-like protein 5 (465 aa).

The tract at residues 26-230 (LKQPFVIGVA…IVQHIRTKLC (205 aa)) is uridine kinase. The uracil phosphoribosyltransferase stretch occupies residues 240–465 (NIFIISSTFQ…SLSTNLKLRS (226 aa)). Residues Lys-264, Arg-273, and 307–310 (CKRL) each bind GTP. 5-phospho-alpha-D-ribose 1-diphosphate is bound by residues Arg-317 and Arg-342. Position 362 (Arg-362) interacts with GTP. 5-phospho-alpha-D-ribose 1-diphosphate-binding positions include Asp-368, 373–376 (SGYS), and Glu-439. Position 438 to 440 (438 to 440 (GEF)) interacts with uracil.

The protein in the N-terminal section; belongs to the uridine kinase family. It in the C-terminal section; belongs to the UPRTase family. Requires Mg(2+) as cofactor.

It catalyses the reaction UMP + diphosphate = 5-phospho-alpha-D-ribose 1-diphosphate + uracil. It carries out the reaction cytidine + ATP = CMP + ADP + H(+). The catalysed reaction is uridine + ATP = UMP + ADP + H(+). It functions in the pathway pyrimidine metabolism; UMP biosynthesis via salvage pathway; UMP from uracil: step 1/1. The protein operates within pyrimidine metabolism; CTP biosynthesis via salvage pathway; CTP from cytidine: step 1/3. Its pathway is pyrimidine metabolism; UMP biosynthesis via salvage pathway; UMP from uridine: step 1/1. Its activity is regulated as follows. Allosterically activated by GTP. Functionally, involved in the pyrimidine salvage pathway. In Arabidopsis thaliana (Mouse-ear cress), this protein is Uridine kinase-like protein 5 (UKL5).